The sequence spans 232 residues: Phosphatidylserine decarboxylase proenzyme (232 aa).

The active-site Schiff-base intermediate with substrate; via pyruvic acid is Ser190. The residue at position 190 (Ser190) is a Pyruvic acid (Ser); by autocatalysis.

It belongs to the phosphatidylserine decarboxylase family. PSD-A subfamily. In terms of assembly, heterodimer of a large membrane-associated beta subunit and a small pyruvoyl-containing alpha subunit. The cofactor is pyruvate. Post-translationally, is synthesized initially as an inactive proenzyme. Formation of the active enzyme involves a self-maturation process in which the active site pyruvoyl group is generated from an internal serine residue via an autocatalytic post-translational modification. Two non-identical subunits are generated from the proenzyme in this reaction, and the pyruvate is formed at the N-terminus of the alpha chain, which is derived from the carboxyl end of the proenzyme. The post-translation cleavage follows an unusual pathway, termed non-hydrolytic serinolysis, in which the side chain hydroxyl group of the serine supplies its oxygen atom to form the C-terminus of the beta chain, while the remainder of the serine residue undergoes an oxidative deamination to produce ammonia and the pyruvoyl prosthetic group on the alpha chain.

Its subcellular location is the cell membrane. It carries out the reaction a 1,2-diacyl-sn-glycero-3-phospho-L-serine + H(+) = a 1,2-diacyl-sn-glycero-3-phosphoethanolamine + CO2. It functions in the pathway phospholipid metabolism; phosphatidylethanolamine biosynthesis; phosphatidylethanolamine from CDP-diacylglycerol: step 2/2. In terms of biological role, catalyzes the formation of phosphatidylethanolamine (PtdEtn) from phosphatidylserine (PtdSer). The protein is Phosphatidylserine decarboxylase proenzyme of Rhodopseudomonas palustris (strain BisB18).